The sequence spans 82 residues: Small ribosomal subunit protein bS18 (82 aa).

The disordered stretch occupies residues M1–C20.

This sequence belongs to the bacterial ribosomal protein bS18 family. Part of the 30S ribosomal subunit. Forms a tight heterodimer with protein bS6.

Its function is as follows. Binds as a heterodimer with protein bS6 to the central domain of the 16S rRNA, where it helps stabilize the platform of the 30S subunit. The protein is Small ribosomal subunit protein bS18 of Rhizobium etli (strain CIAT 652).